The following is a 129-amino-acid chain: MAKPAARPRKKVKKTVVDGIAHIHASFNNTIVTITDRQGNALSWATSGGSGFRGSRKSTPFAAQVAAERAGQAALEYGLKNLDVNVKGPGPGRESAVRALNACGYKIASITDVTPIPHNGCRPPKKRRV.

Belongs to the universal ribosomal protein uS11 family. In terms of assembly, part of the 30S ribosomal subunit. Interacts with proteins S7 and S18. Binds to IF-3.

Located on the platform of the 30S subunit, it bridges several disparate RNA helices of the 16S rRNA. Forms part of the Shine-Dalgarno cleft in the 70S ribosome. This Azotobacter vinelandii (strain DJ / ATCC BAA-1303) protein is Small ribosomal subunit protein uS11.